Reading from the N-terminus, the 152-residue chain is MPGKGDAPVLPGARAVARYVRISPMKARRVVNLVRGLPAKEALTVLQFAPQAASEQVYKVLASAIANAENNERLDPDALLVSEAYVDEGPTMKRFQPRAQGRAYRIRKRTCHITVVVEAVAPAAPTKAASKKAAPAKQTTPAATESKTEGAE.

Residues 124–143 (APTKAASKKAAPAKQTTPAA) show a composition bias toward low complexity. The disordered stretch occupies residues 124–152 (APTKAASKKAAPAKQTTPAATESKTEGAE).

Belongs to the universal ribosomal protein uL22 family. In terms of assembly, part of the 50S ribosomal subunit.

This protein binds specifically to 23S rRNA; its binding is stimulated by other ribosomal proteins, e.g. L4, L17, and L20. It is important during the early stages of 50S assembly. It makes multiple contacts with different domains of the 23S rRNA in the assembled 50S subunit and ribosome. In terms of biological role, the globular domain of the protein is located near the polypeptide exit tunnel on the outside of the subunit, while an extended beta-hairpin is found that lines the wall of the exit tunnel in the center of the 70S ribosome. This chain is Large ribosomal subunit protein uL22, found in Salinispora arenicola (strain CNS-205).